Consider the following 154-residue polypeptide: Methylglyoxal synthase (154 aa).

Residues 6–154 (SPLPANKAIA…AYMARRAQGN (149 aa)) enclose the MGS-like domain. Substrate-binding positions include histidine 19, lysine 23, 45 to 48 (TGTT), and 65 to 66 (SG). The active-site Proton donor/acceptor is aspartate 71. Histidine 98 contributes to the substrate binding site.

It belongs to the methylglyoxal synthase family.

It carries out the reaction dihydroxyacetone phosphate = methylglyoxal + phosphate. In terms of biological role, catalyzes the formation of methylglyoxal from dihydroxyacetone phosphate. This chain is Methylglyoxal synthase, found in Cellvibrio japonicus (strain Ueda107) (Pseudomonas fluorescens subsp. cellulosa).